The primary structure comprises 501 residues: Lysine--tRNA ligase (501 aa).

Mg(2+) contacts are provided by E406 and E413.

This sequence belongs to the class-II aminoacyl-tRNA synthetase family. Homodimer. Mg(2+) serves as cofactor.

It is found in the cytoplasm. The enzyme catalyses tRNA(Lys) + L-lysine + ATP = L-lysyl-tRNA(Lys) + AMP + diphosphate. This Halalkalibacterium halodurans (strain ATCC BAA-125 / DSM 18197 / FERM 7344 / JCM 9153 / C-125) (Bacillus halodurans) protein is Lysine--tRNA ligase (lysS).